The chain runs to 245 residues: Eukaryotic translation initiation factor 3 subunit K (245 aa).

Residues 46-227 (YDCYANLALL…EAKGTVVREN (182 aa)) enclose the PCI domain.

It belongs to the eIF-3 subunit K family. In terms of assembly, component of the eukaryotic translation initiation factor 3 (eIF-3) complex.

The protein localises to the cytoplasm. Its function is as follows. Component of the eukaryotic translation initiation factor 3 (eIF-3) complex, which is involved in protein synthesis of a specialized repertoire of mRNAs and, together with other initiation factors, stimulates binding of mRNA and methionyl-tRNAi to the 40S ribosome. The eIF-3 complex specifically targets and initiates translation of a subset of mRNAs involved in cell proliferation. This Botryotinia fuckeliana (strain B05.10) (Noble rot fungus) protein is Eukaryotic translation initiation factor 3 subunit K.